The following is a 298-amino-acid chain: MAITAQMVKELRESTGAGMMDAKKALTETDGDMEAAVDWLRTKGLAKAAKKAGRTAAEGLVGVCVDGGTGVAVEVNSETDFVAKNADFQSMVTGFTKAALTVDDIEALKAADMGGKTVETTLQETIAVIGENMTLRRMAKISGDSVAAYVHNAAADGLGKIGVLVAVKGADNGIAKQVAMHIAATNPMALSEADLDPTVVERERTVQTQKALEENAASAKPKPDAVIENNIIPGRMKKFLEENTLLGQKFVINPDLTVAEAAKQAGVEIVGFVRMAVGEGIEKEKEDFAAEVAKTLAG.

The involved in Mg(2+) ion dislocation from EF-Tu stretch occupies residues 79-82 (TDFV).

It belongs to the EF-Ts family.

The protein localises to the cytoplasm. Its function is as follows. Associates with the EF-Tu.GDP complex and induces the exchange of GDP to GTP. It remains bound to the aminoacyl-tRNA.EF-Tu.GTP complex up to the GTP hydrolysis stage on the ribosome. The sequence is that of Elongation factor Ts from Cereibacter sphaeroides (strain ATCC 17029 / ATH 2.4.9) (Rhodobacter sphaeroides).